The chain runs to 365 residues: Neuronal migration protein doublecortin (365 aa).

A Phosphoserine; by CDK5 modification is found at Ser28. Ser47 is modified (phosphoserine; by MARK1 and PKA). Doublecortin domains follow at residues 53 to 139 and 180 to 263; these read KKVR…VEYT and KLVT…AQDD. Tyr70 carries the phosphotyrosine; by ABL modification. At Ser74 the chain carries Phosphoserine; by PKC. Ser90 is subject to Phosphoserine; by CK2. Ser110 carries the post-translational modification Phosphoserine; by PKC. Phosphoserine; by CK2, MARK1 and PKA is present on Ser115. Position 265 is a phosphoserine; by CK2 (Ser265). The interval 275–365 is disordered; it reads KGNPSATAGP…DDSDSLGDSM (91 aa). Position 287 is a phosphoserine; by CDK5 (Ser287). At Thr289 the chain carries Phosphothreonine; by CDK5. Ser294 bears the Phosphoserine; by PKC mark. Ser297 is subject to Phosphoserine; by CDK5. Ser306 carries the phosphoserine; by CK2 modification. Residue Ser306 is modified to Phosphoserine; by DYRK2. A compositionally biased stretch (polar residues) spans 307-341; that stretch reads PADSGNDQDANGTSSSQLSTPKSKQSPISTPTSPG. The residue at position 326 (Thr326) is a Phosphothreonine; by CDK5. Thr326 carries the post-translational modification Phosphothreonine; by PKC and MAPK. Ser332 bears the Phosphoserine; by CDK5 mark. Ser332 is modified (phosphoserine; by MAPK). The residue at position 336 (Thr336) is a Phosphothreonine; by MAPK. At Ser339 the chain carries Phosphoserine; by CDK5. Residue Ser339 is modified to Phosphoserine; by MAPK. The residue at position 342 (Ser342) is a Phosphoserine; by PKC. Phosphoserine; by CK2 occurs at positions 354 and 360. Positions 356–365 are enriched in acidic residues; the sequence is DDSDSLGDSM.

In terms of assembly, interacts with tubulin. Interacts with USP9X. In terms of processing, phosphorylation by MARK1, MARK2 and PKA regulates its ability to bind microtubules. Phosphorylation at Ser-265 and Ser-297 seems to occur only in neonatal brain, the levels falling precipitously by postnatal day 21. Post-translationally, ubiquitinated by MDM2, leading to its degradation by the proteasome. Ubiquitinated by MDM2 and subsequent degradation leads to reduce the dendritic spine density of olfactory bulb granule cells.

Its subcellular location is the cytoplasm. The protein resides in the cell projection. It localises to the neuron projection. Functionally, microtubule-associated protein required for initial steps of neuronal dispersion and cortex lamination during cerebral cortex development. May act by competing with the putative neuronal protein kinase DCLK1 in binding to a target protein. May in that way participate in a signaling pathway that is crucial for neuronal interaction before and during migration, possibly as part of a calcium ion-dependent signal transduction pathway. May participate along with PAFAH1B1/LIS-1 in a distinct overlapping signaling pathway that promotes neuronal migration. This is Neuronal migration protein doublecortin (Dcx) from Rattus norvegicus (Rat).